A 110-amino-acid polypeptide reads, in one-letter code: uncharacterized protein (110 aa).

The N-terminal stretch at 1-26 is a signal peptide; the sequence is MIRNVLLAFMICSGMTLLGGCSSVMS. Positions 87–110 are disordered; sequence RVEKSEANAQATNAVIPPARMPDN.

This sequence to E.coli YceK.

This is an uncharacterized protein from Escherichia coli (strain K12).